The chain runs to 1377 residues: Hemoglobin-binding protease hbp autotransporter (1377 aa).

Positions 1 to 52 (MNRIYSLRYSAVARGFIAVSEFARKCVHKSVRRLCFPVLLLIPVLFSAGSLA) are cleaved as a signal peptide. The Peptidase S6 domain occupies 53 to 302 (GTVNNELGYQ…AVIPLDFIGQ (250 aa)). Catalysis depends on charge relay system residues histidine 125, aspartate 153, and serine 259. The Autotransporter domain occupies 1111–1377 (DINGEAGTWV…AINANIRYSF (267 aa)).

Cleaved to release the mature protein from the outer membrane.

The protein localises to the periplasm. It is found in the secreted. Its subcellular location is the cell surface. The protein resides in the cell outer membrane. Protease activity is inhibited by 3,4-dichloroisocoumarin. Functionally, interacts with hemoglobin, degrades it and subsequently binds the released heme. Could make heme accessible not only for E.coli, but also for B.fragilis during mixed intra-abdominal infections. Has a role in abscess formation. The protein is Hemoglobin-binding protease hbp autotransporter (hbp) of Escherichia coli.